A 120-amino-acid polypeptide reads, in one-letter code: Prophage bactoprenol-linked glucose translocase homolog (120 aa).

Topologically, residues 1–9 (MLKLFAKYT) are cytoplasmic. The helical transmembrane segment at 10-30 (SIGVLNTLIHWVVFGVCIYVA) threads the bilayer. Topologically, residues 31-33 (HTN) are periplasmic. A helical membrane pass occupies residues 34–54 (QALANFAGFVVAVSFSFFANA). Topologically, residues 55 to 64 (KFTFKASTTT) are cytoplasmic. Residues 65-85 (MRYMLYVGFMGTLSATVGWAA) form a helical membrane-spanning segment. Residues 86 to 88 (DRC) lie on the Periplasmic side of the membrane. Residues 89-109 (ALPPMITLVTFSAISLVCGFV) traverse the membrane as a helical segment. Residues 110–120 (YSKFIVFRDAK) lie on the Cytoplasmic side of the membrane.

Belongs to the GtrA family.

Its subcellular location is the cell inner membrane. In terms of biological role, involved in O antigen modification. Involved in the translocation of bactoprenol-linked glucose across the cytoplasmic membrane. The sequence is that of Prophage bactoprenol-linked glucose translocase homolog (yfdG) from Escherichia coli (strain K12).